Here is a 419-residue protein sequence, read N- to C-terminus: MTTQLEQAWELAKQRFAAVGIDVEEALRQLDRLPVSMHCWQGDDVAGFENPEGSLTGGIQSTGNYPGKARNATELRADLEQALRLIPGPKRLNLHAIYLESDTPVARDQIKPEHFKNWVEWAKANRLGLDFNPTCFSHPLSADGFTLSHPDAKIRQFWIDHCKASRRVSAYFGEQLGTPSVMNIWIPDGMKDITVDRLAPRQRLLEALDEVISEKFDPAHHIDAVESKLFGIGAESYTVGSNEFYMGYATSRQTALCLDAGHFHPTEVISDKISAAMLYVPRLLLHVSRPVRWDSDHVVLLDDETQAIASEIVRHNLFDRVHIGLDFFDASINRVAAWVIGTRNMKKALLRALLEPTDQLRQLEASGDYTARLAMLEEQKSLPWQAVWEMYCQRHDTPAGSQWLDSVRTYEKEILSKRS.

Residues H262, D294, and D296 each coordinate Mn(2+).

The protein belongs to the rhamnose isomerase family. As to quaternary structure, homotetramer. The cofactor is Mn(2+).

The protein resides in the cytoplasm. The catalysed reaction is L-rhamnopyranose = L-rhamnulose. It functions in the pathway carbohydrate degradation; L-rhamnose degradation; glycerone phosphate from L-rhamnose: step 1/3. Functionally, catalyzes the interconversion of L-rhamnose and L-rhamnulose. The chain is L-rhamnose isomerase from Salmonella typhi.